Reading from the N-terminus, the 146-residue chain is Hemoglobin subunit beta (146 aa).

Val-1 is subject to N-acetylvaline. In terms of domain architecture, Globin spans His-2–His-146. His-63 serves as a coordination point for heme b. The residue at position 82 (Lys-82) is an N6-acetyllysine. His-92 is a binding site for heme b. An S-nitrosocysteine modification is found at Cys-93. N6-acetyllysine is present on Lys-144.

The protein belongs to the globin family. As to quaternary structure, heterotetramer of two alpha chains and two beta chains. In terms of tissue distribution, red blood cells.

In terms of biological role, involved in oxygen transport from the lung to the various peripheral tissues. This is Hemoglobin subunit beta (HBB) from Cavia porcellus (Guinea pig).